Here is a 359-residue protein sequence, read N- to C-terminus: Peptide chain release factor 1 (359 aa).

The residue at position 235 (glutamine 235) is an N5-methylglutamine.

This sequence belongs to the prokaryotic/mitochondrial release factor family. Methylated by PrmC. Methylation increases the termination efficiency of RF1.

Its subcellular location is the cytoplasm. In terms of biological role, peptide chain release factor 1 directs the termination of translation in response to the peptide chain termination codons UAG and UAA. This chain is Peptide chain release factor 1, found in Methylibium petroleiphilum (strain ATCC BAA-1232 / LMG 22953 / PM1).